Consider the following 86-residue polypeptide: Small ribosomal subunit protein uS17 (86 aa).

This sequence belongs to the universal ribosomal protein uS17 family. Part of the 30S ribosomal subunit.

Functionally, one of the primary rRNA binding proteins, it binds specifically to the 5'-end of 16S ribosomal RNA. The sequence is that of Small ribosomal subunit protein uS17 from Rhizorhabdus wittichii (strain DSM 6014 / CCUG 31198 / JCM 15750 / NBRC 105917 / EY 4224 / RW1) (Sphingomonas wittichii).